Consider the following 83-residue polypeptide: Hainantoxin-III 2 (83 aa).

Residues 1-21 form the signal peptide; that stretch reads MKASMYLALAGLVLLFVVGYA. The propeptide occupies 22 to 48; it reads SESEEKEFPRELLSKIFAVDDFKGEER. Disulfide bonds link cysteine 50-cysteine 65, cysteine 57-cysteine 70, and cysteine 64-cysteine 77. A Leucine amide modification is found at leucine 81.

The protein belongs to the neurotoxin 10 (Hwtx-1) family. 15 (Hntx-3) subfamily. As to quaternary structure, monomer. In terms of tissue distribution, expressed by the venom gland.

It is found in the secreted. In terms of biological role, selective antagonist of neuronal tetrodotoxin (TTX)-sensitive voltage-gated sodium channels (IC(50)=1270 nM on Nav1.1/SCN1A, 270 nM on Nav1.2/SCN2A, 491 nM on Nav1.3/SCN3A and 232 nM on Nav1.7/SCN9A). This toxin suppress Nav1.7 current amplitude without significantly altering the activation, inactivation, and repriming kinetics. Short extreme depolarizations partially activate the toxin-bound channel, indicating voltage-dependent inhibition of this toxin. This toxin increases the deactivation of the Nav1.7 current after extreme depolarizations. The toxin-Nav1.7 complex is gradually dissociated upon prolonged strong depolarizations in a voltage-dependent manner, and the unbound toxin rebinds to Nav1.7 after a long repolarization. Moreover, analysis of chimeric channels showed that the DIIS3-S4 linker is critical for toxin binding to Nav1.7. These data are consistent with this toxin interacting with Nav1.7 site 4 and trapping the domain II voltage sensor in the closed state. The sequence is that of Hainantoxin-III 2 from Cyriopagopus hainanus (Chinese bird spider).